The primary structure comprises 353 residues: Protein RecA (353 aa).

67–74 is an ATP binding site; the sequence is GPESSGKT.

This sequence belongs to the RecA family.

Its subcellular location is the cytoplasm. In terms of biological role, can catalyze the hydrolysis of ATP in the presence of single-stranded DNA, the ATP-dependent uptake of single-stranded DNA by duplex DNA, and the ATP-dependent hybridization of homologous single-stranded DNAs. It interacts with LexA causing its activation and leading to its autocatalytic cleavage. This Salmonella agona (strain SL483) protein is Protein RecA.